Reading from the N-terminus, the 179-residue chain is Large ribosomal subunit protein uL5 (179 aa).

It belongs to the universal ribosomal protein uL5 family. As to quaternary structure, part of the 50S ribosomal subunit; part of the 5S rRNA/L5/L18/L25 subcomplex. Contacts the 5S rRNA and the P site tRNA. Forms a bridge to the 30S subunit in the 70S ribosome.

In terms of biological role, this is one of the proteins that bind and probably mediate the attachment of the 5S RNA into the large ribosomal subunit, where it forms part of the central protuberance. In the 70S ribosome it contacts protein S13 of the 30S subunit (bridge B1b), connecting the 2 subunits; this bridge is implicated in subunit movement. Contacts the P site tRNA; the 5S rRNA and some of its associated proteins might help stabilize positioning of ribosome-bound tRNAs. The polypeptide is Large ribosomal subunit protein uL5 (Ectopseudomonas mendocina (strain ymp) (Pseudomonas mendocina)).